Reading from the N-terminus, the 597-residue chain is ATP-dependent lipid A-core flippase (597 aa).

6 consecutive transmembrane segments (helical) span residues W26 to A46, I65 to I85, I144 to L164, G166 to V186, A250 to L270, and M276 to L296. The ABC transmembrane type-1 domain maps to A29–R311. The ABC transporter domain occupies I343 to L579. ATP is bound at residue G377 to S384.

This sequence belongs to the ABC transporter superfamily. Lipid exporter (TC 3.A.1.106) family. As to quaternary structure, homodimer.

The protein resides in the cell inner membrane. It carries out the reaction ATP + H2O + lipid A-core oligosaccharideSide 1 = ADP + phosphate + lipid A-core oligosaccharideSide 2.. Its function is as follows. Involved in lipopolysaccharide (LPS) biosynthesis. Translocates lipid A-core from the inner to the outer leaflet of the inner membrane. Transmembrane domains (TMD) form a pore in the inner membrane and the ATP-binding domain (NBD) is responsible for energy generation. The chain is ATP-dependent lipid A-core flippase from Nitrosococcus oceani (strain ATCC 19707 / BCRC 17464 / JCM 30415 / NCIMB 11848 / C-107).